We begin with the raw amino-acid sequence, 411 residues long: Protein translocase subunit SecY (411 aa).

Helical transmembrane passes span 13 to 33, 52 to 72, 111 to 131, 135 to 155, 163 to 180, 197 to 217, 252 to 272, 291 to 311, 350 to 370, and 377 to 397; these read FTLL…PGID, IFSG…VPYI, ALGW…PYVF, FTFV…IMWL, GIGN…VSGL, SIKF…TIFV, GVMP…LTQL, LYLV…TSIV, FLGA…EKVA, and GLGA…AKQI.

It belongs to the SecY/SEC61-alpha family. As to quaternary structure, component of the plastid Sec protein translocase complex, which is composed of at least SecY, SecE and SecG.

The protein resides in the plastid. It is found in the chloroplast thylakoid membrane. Functionally, the central subunit of the protein translocation channel SecYE. Consists of two halves formed by TMs 1-5 and 6-10. These two domains form a lateral gate at the front which open onto the bilayer between TMs 2 and 7, and are clamped together by SecE at the back. The channel is closed by both a pore ring composed of hydrophobic SecY resides and a short helix (helix 2A) on the extracellular side of the membrane which forms a plug. In Porphyra purpurea (Red seaweed), this protein is Protein translocase subunit SecY.